The chain runs to 388 residues: Omega-hydroxy-beta-dihydromenaquinone-9 sulfotransferase Stf3 (388 aa).

It belongs to the Stf3 family.

It carries out the reaction omega-hydroxy-beta-dihydromenaquinone-9 + 3'-phosphoadenylyl sulfate = omega-sulfo-beta-dihydromenaquinone-9 + adenosine 3',5'-bisphosphate + H(+). Functionally, involved in the biosynthesis of sulfomenaquinone (SMK, initially named S881 on the basis of its mass), which is localized in the outer envelope of M.bovis and negatively regulates its virulence. Catalyzes the transfer of a sulfonate group from 3'-phosphoadenosine-5'-phosphosulfate (PAPS) to omega-hydroxy-beta-dihydromenaquinone-9, generating omega-sulfo-beta-dihydromenaquinone-9 (sulfomenaquinone). This Mycobacterium bovis (strain ATCC BAA-935 / AF2122/97) protein is Omega-hydroxy-beta-dihydromenaquinone-9 sulfotransferase Stf3.